Reading from the N-terminus, the 224-residue chain is Casparian strip membrane protein 3 (224 aa).

The tract at residues 1–30 (MESKKEGVASAPTSPESRRTRSNGKGKTIA) is disordered. Residues 1 to 57 (MESKKEGVASAPTSPESRRTRSNGKGKTIAEATPPSVTVVSTKVTPSPRGGWRKGAA) are Cytoplasmic-facing. The helical transmembrane segment at 58–78 (ILDFILRLGAISSAIGAAAVM) threads the bilayer. At 79–105 (GNNEQILPFFTQFFQFHVQWDDFPMFQ) the chain is on the extracellular side. A helical transmembrane segment spans residues 106–126 (FFVFANGAAVVFLILSLPFSI). Topologically, residues 127 to 138 (VCIVRPFAVGPR) are cytoplasmic. Residues 139–159 (LLLVIVDIFAMALVIAAASAA) traverse the membrane as a helical segment. Residues 160 to 191 (AAVVYLAHNGSQDANWIAICQQYTDFCQVTSQ) are Extracellular-facing. The N-linked (GlcNAc...) asparagine glycan is linked to Asn-168. The chain crosses the membrane as a helical span at residues 192 to 212 (AVVASFVAAVFLICLIVLSSV). Residues 213-224 (ALKKGLKREFGW) lie on the Cytoplasmic side of the membrane.

Belongs to the Casparian strip membrane proteins (CASP) family. In terms of assembly, homodimer and heterodimers.

It is found in the cell membrane. In terms of biological role, regulates membrane-cell wall junctions and localized cell wall deposition. Required for establishment of the Casparian strip membrane domain (CSD) and the subsequent formation of Casparian strips, a cell wall modification of the root endodermis that determines an apoplastic barrier between the intraorganismal apoplasm and the extraorganismal apoplasm and prevents lateral diffusion. The polypeptide is Casparian strip membrane protein 3 (Vigna unguiculata (Cowpea)).